Consider the following 223-residue polypeptide: Putative PAN domain-containing protein R486 (223 aa).

The signal sequence occupies residues 1–23 (MSQTAIIIWIVVIIILLVLGGLG). Positions 39 to 73 (PTPINPPSSITPIQPINPPSSITPIQPSGPPSGGN) are disordered. Positions 45 to 64 (PSSITPIQPINPPSSITPIQ) are enriched in low complexity. 2 PAN domains span residues 80–155 (CPAY…EDGC) and 159–223 (ARYN…KMPH). 2 cysteine pairs are disulfide-bonded: Cys80/Cys155 and Cys109/Cys131. Residues Asn162, Asn189, and Asn213 are each glycosylated (N-linked (GlcNAc...) asparagine; by host). Cys182 and Cys204 form a disulfide bridge.

It is found in the secreted. Its subcellular location is the virion. The chain is Putative PAN domain-containing protein R486 from Acanthamoeba polyphaga mimivirus (APMV).